Consider the following 473-residue polypeptide: Uronate isomerase (473 aa).

Belongs to the metallo-dependent hydrolases superfamily. Uronate isomerase family.

It catalyses the reaction D-glucuronate = D-fructuronate. The catalysed reaction is aldehydo-D-galacturonate = keto-D-tagaturonate. The protein operates within carbohydrate metabolism; pentose and glucuronate interconversion. This Bacillus subtilis (strain 168) protein is Uronate isomerase (uxaC).